The chain runs to 377 residues: PqqA peptide cyclase (377 aa).

Positions 12 to 228 constitute a Radical SAM core domain; that stretch reads FGIPLAVLLE…EAARERLKGQ (217 aa). [4Fe-4S] cluster is bound by residues Cys-26, Cys-30, and Cys-33.

The protein belongs to the radical SAM superfamily. PqqE family. Interacts with PqqD. The interaction is necessary for activity of PqqE. The cofactor is [4Fe-4S] cluster.

The catalysed reaction is [PQQ precursor protein] + S-adenosyl-L-methionine = E-Y cross-linked-[PQQ precursor protein] + 5'-deoxyadenosine + L-methionine + H(+). Its pathway is cofactor biosynthesis; pyrroloquinoline quinone biosynthesis. Catalyzes the cross-linking of a glutamate residue and a tyrosine residue in the PqqA protein as part of the biosynthesis of pyrroloquinoline quinone (PQQ). The polypeptide is PqqA peptide cyclase (Rhodopseudomonas palustris (strain ATCC BAA-98 / CGA009)).